The following is a 317-amino-acid chain: Probable cell division protein WhiA (317 aa).

Residues T281–G314 constitute a DNA-binding region (H-T-H motif).

Belongs to the WhiA family.

Its function is as follows. Involved in cell division and chromosome segregation. This chain is Probable cell division protein WhiA, found in Alkaliphilus metalliredigens (strain QYMF).